The following is a 556-amino-acid chain: 2-isopropylmalate synthase (556 aa).

The region spanning Pro-33–Asp-307 is the Pyruvate carboxyltransferase domain. The Mg(2+) site is built by Asp-42, His-246, His-248, and Asn-282. Residues Ala-439–Ala-556 are regulatory domain.

It belongs to the alpha-IPM synthase/homocitrate synthase family. LeuA type 2 subfamily. In terms of assembly, homodimer. Requires Mg(2+) as cofactor.

It is found in the cytoplasm. The catalysed reaction is 3-methyl-2-oxobutanoate + acetyl-CoA + H2O = (2S)-2-isopropylmalate + CoA + H(+). It participates in amino-acid biosynthesis; L-leucine biosynthesis; L-leucine from 3-methyl-2-oxobutanoate: step 1/4. Catalyzes the condensation of the acetyl group of acetyl-CoA with 3-methyl-2-oxobutanoate (2-ketoisovalerate) to form 3-carboxy-3-hydroxy-4-methylpentanoate (2-isopropylmalate). The sequence is that of 2-isopropylmalate synthase from Pseudomonas aeruginosa (strain ATCC 15692 / DSM 22644 / CIP 104116 / JCM 14847 / LMG 12228 / 1C / PRS 101 / PAO1).